A 600-amino-acid chain; its full sequence is Elongation factor 4 (600 aa).

The region spanning 5–187 (KYIRNFSIIA…AIVSKLPPPK (183 aa)) is the tr-type G domain. GTP is bound by residues 17–22 (DHGKST) and 134–137 (NKLD).

This sequence belongs to the TRAFAC class translation factor GTPase superfamily. Classic translation factor GTPase family. LepA subfamily.

The protein resides in the cell inner membrane. It catalyses the reaction GTP + H2O = GDP + phosphate + H(+). Its function is as follows. Required for accurate and efficient protein synthesis under certain stress conditions. May act as a fidelity factor of the translation reaction, by catalyzing a one-codon backward translocation of tRNAs on improperly translocated ribosomes. Back-translocation proceeds from a post-translocation (POST) complex to a pre-translocation (PRE) complex, thus giving elongation factor G a second chance to translocate the tRNAs correctly. Binds to ribosomes in a GTP-dependent manner. The polypeptide is Elongation factor 4 (Rickettsia rickettsii (strain Iowa)).